The following is a 355-amino-acid chain: Sulfate/thiosulfate import ATP-binding protein CysA (355 aa).

An ABC transporter domain is found at 3 to 233; that stretch reads IIINNVSKQF…PASPFVMGFI (231 aa). 35-42 lines the ATP pocket; that stretch reads GPSGSGKS.

This sequence belongs to the ABC transporter superfamily. Sulfate/tungstate importer (TC 3.A.1.6) family. The complex is composed of two ATP-binding proteins (CysA), two transmembrane proteins (CysT and CysW) and a solute-binding protein (CysP).

It is found in the cell inner membrane. It catalyses the reaction sulfate(out) + ATP + H2O = sulfate(in) + ADP + phosphate + H(+). The enzyme catalyses thiosulfate(out) + ATP + H2O = thiosulfate(in) + ADP + phosphate + H(+). In terms of biological role, part of the ABC transporter complex CysAWTP involved in sulfate/thiosulfate import. Responsible for energy coupling to the transport system. This chain is Sulfate/thiosulfate import ATP-binding protein CysA, found in Synechocystis sp. (strain ATCC 27184 / PCC 6803 / Kazusa).